The primary structure comprises 231 residues: Killer cell lectin-like receptor subfamily F member 1 (231 aa).

Over 1–38 (MQDEERYMTLNVQSKKRTSTQTTQLTFKDYSVVLHWYK) the chain is Cytoplasmic. Tyrosine 7 bears the Phosphotyrosine mark. A helical; Signal-anchor for type II membrane protein membrane pass occupies residues 39-59 (ILLGISGTLNGILALALISLI). Residues 60–231 (LLVSQGVLLK…SSVFKWICQY (172 aa)) are Extracellular-facing. Residues asparagine 77, asparagine 91, asparagine 96, and asparagine 176 are each glycosylated (N-linked (GlcNAc...) asparagine). The C-type lectin domain maps to 121–230 (YRGKCYWFSN…CSSVFKWICQ (110 aa)). Cystine bridges form between cysteine 142–cysteine 229 and cysteine 208–cysteine 221.

As to quaternary structure, homodimer. Interacts with CLEC2B. In terms of processing, phosphorylated on Tyr-7; this phosphorylation is required for NKp80/KLRF1-mediated cytotoxicity.

The protein localises to the membrane. In terms of biological role, functions as an activating receptor involved in immunosurveillance upon binding to various ligands displayed at the surface of myeloid cells. Upon interaction with CLEC2B ligand, stimulates NK-cell cytotoxicity and cytokine production leading to the cytolysis of malignant CLEC2B-expressing myeloid cells. Actviation of the common cytotoxicity pathway involves SRC and SYK kinases. The protein is Killer cell lectin-like receptor subfamily F member 1 (KLRF1) of Macaca fascicularis (Crab-eating macaque).